A 583-amino-acid chain; its full sequence is Moesin/ezrin/radixin homolog 1 (583 aa).

One can recognise an FERM domain in the interval 11–301 (MNVRVTTMDA…GNHELYMRRR (291 aa)). Disordered stretches follow at residues 466-518 (TTTP…RTLA) and 539-558 (RDDT…VRQG). Acidic residues predominate over residues 476–485 (EEEEDNEEEL). Over residues 496-518 (DYSKDFDTDEHIKDPVEERRTLA) the composition is skewed to basic and acidic residues. Phosphothreonine is present on T564.

Interacts with cytoskeletal actin.

The protein localises to the cell junction. Its subcellular location is the adherens junction. The protein resides in the cell projection. It localises to the microvillus. It is found in the rhabdomere. The protein localises to the cell membrane. Its subcellular location is the cytoplasm. The protein resides in the cytoskeleton. Functionally, involved in connections of major cytoskeletal structures to the plasma membrane. This is Moesin/ezrin/radixin homolog 1 from Aedes aegypti (Yellowfever mosquito).